We begin with the raw amino-acid sequence, 513 residues long: Sphingolipid C9-methyltransferase 1 (513 aa).

2 helical membrane passes run 63–83 and 85–105; these read FLVAALLGIPQWLSWKLGGGL and TAIFLSIFTTIPVLAVIWTVM. S-adenosyl-L-methionine contacts are provided by residues 228 to 229, 265 to 273, 291 to 296, and 321 to 322; these read YT, LLDIGCGWG, TLARNQ, and YR.

It belongs to the CFA/CMAS family.

Its subcellular location is the membrane. The catalysed reaction is a (4E,8E)-4-sphinga-4,8-dienine ceramide + S-adenosyl-L-methionine = a 9-methyl-(4E,8E)-sphinga-4,8-dienine ceramide + S-adenosyl-L-homocysteine + H(+). It functions in the pathway lipid metabolism; sphingolipid metabolism. Its function is as follows. Catalyzes methylation of the sphingoid base component of glucosylceramides (GluCers) at the C9-position. Sphingolipid C9-methylation requires 4,8-desaturated ceramides as substrates. Glucosylceramides play important roles in the growth, differentiation and pathogenicity. The methyl group at the C9-position distinguishes fungal glucosylceramides from those of plants and animals, and may thus play a role in host-pathogen interactions enabling the host to recognize the fungal attack and initiate specific defense responses. However, C-9 methylation of GlcCers is not essential for the sensitivity of F.graminearum to plant defensins MsDef1 and RsAFP2. This is Sphingolipid C9-methyltransferase 1 from Gibberella zeae (strain ATCC MYA-4620 / CBS 123657 / FGSC 9075 / NRRL 31084 / PH-1) (Wheat head blight fungus).